A 274-amino-acid polypeptide reads, in one-letter code: Protein YeeZ (274 aa).

A signal peptide spans 1 to 24; the sequence is MKKVAIVGLGWLGMPLAMSLSARG. 170–177 serves as a coordination point for ATP; it reads GRFFAGKT.

The polypeptide is Protein YeeZ (yeeZ) (Escherichia coli O157:H7).